Consider the following 475-residue polypeptide: Flotillin-like protein 4 (475 aa).

Coiled-coil stretches lie at residues 235 to 255 and 305 to 325; these read ENQR…KKAA and QYET…KEAE.

Belongs to the band 7/mec-2 family. Flotillin subfamily. As to expression, expressed in roots and nodules. Primarily expressed in vascular tissues. Upon induction of nodulation, expansion of expression in the root cortex in the region of elongating root hairs, which will eventually become colonized by bacteria. Expressed in the infection zone in nodules.

The protein resides in the membrane. Its subcellular location is the caveola. It is found in the cell membrane. Functionally, may act as a scaffolding protein within caveolar membranes, functionally participating in formation of caveolae or caveolae-like vesicles. Required for normal infection threads initiation and elongation and nodulation. Probably involved in polar growth of the infection thread. The protein is Flotillin-like protein 4 (FLOT4) of Medicago truncatula (Barrel medic).